Reading from the N-terminus, the 196-residue chain is Hibernation-associated plasma protein HP-20 (196 aa).

The first 23 residues, 1–23, serve as a signal peptide directing secretion; it reads MTDVWRLAIFVLMVNVLNDQVSC. A Collagen-like domain is found at 25–63; that stretch reads GPPGPVGYPGVPGVPGPRGPPGQPGAAGRPGDPGPKGPS. The segment covering 28–47 has biased composition (pro residues); sequence GPVGYPGVPGVPGPRGPPGQ. Residues 28–64 form a disordered region; that stretch reads GPVGYPGVPGVPGPRGPPGQPGAAGRPGDPGPKGPSV. One can recognise a C1q domain in the interval 67 to 196; sequence PCRERSAFTV…IYFSGFLISS (130 aa).

Plasma; synthesized in the liver.

The protein resides in the secreted. Plasma proteins HP-20, HP-25, HP-27 and HP-55 form a 140 kDa complex via disulfide bonds in the plasma and are hibernation specific. In Tamias sibiricus (Siberian chipmunk), this protein is Hibernation-associated plasma protein HP-20.